The following is a 239-amino-acid chain: 2,3,4,5-tetrahydropyridine-2,6-dicarboxylate N-acetyltransferase (239 aa).

The protein belongs to the transferase hexapeptide repeat family. DapH subfamily.

The enzyme catalyses (S)-2,3,4,5-tetrahydrodipicolinate + acetyl-CoA + H2O = L-2-acetamido-6-oxoheptanedioate + CoA. It participates in amino-acid biosynthesis; L-lysine biosynthesis via DAP pathway; LL-2,6-diaminopimelate from (S)-tetrahydrodipicolinate (acetylase route): step 1/3. Catalyzes the transfer of an acetyl group from acetyl-CoA to tetrahydrodipicolinate. In Staphylococcus aureus (strain Newman), this protein is 2,3,4,5-tetrahydropyridine-2,6-dicarboxylate N-acetyltransferase.